Here is a 141-residue protein sequence, read N- to C-terminus: Ribonuclease VapC2 (141 aa).

The region spanning 7-129 is the PINc domain; sequence LIDKSALVRL…FDAIAALTGQ (123 aa). The Mg(2+) site is built by Asp99, Asp117, and Asp119.

This sequence belongs to the PINc/VapC protein family. As to quaternary structure, probably active as a homodimer. The cofactor is Mg(2+).

In terms of biological role, toxic component of a type II toxin-antitoxin (TA) system. Acts as an RNase. All its toxic effects are neutralized by coexpression with cognate antitoxin VapB2. In Mycobacterium tuberculosis (strain CDC 1551 / Oshkosh), this protein is Ribonuclease VapC2.